A 606-amino-acid polypeptide reads, in one-letter code: Gastrula zinc finger protein XlCGF66.1 (606 aa).

Disordered regions lie at residues 1-31 (MGMW…RGKK) and 240-271 (TLHS…KRQK). The segment covering 242–262 (HSKDSCNEGHKHLSHKSDYNK) has biased composition (basic and acidic residues). C2H2-type zinc fingers lie at residues 273–295 (FSCS…QKTH), 300–322 (LLCL…RQTH), 328–350 (FSCS…QITH), 384–407 (DFCS…QQVH), 413–435 (FSCT…QRTH), 441–464 (YSCS…QQVH), 470–492 (FFCS…QRTH), 498–521 (YSCS…QQVH), 527–549 (FSCS…QRTH), 555–578 (DFCF…QQVH), and 584–606 (FSCS…HRTH).

This sequence belongs to the krueppel C2H2-type zinc-finger protein family.

The protein localises to the nucleus. Functionally, may be involved in transcriptional regulation. The polypeptide is Gastrula zinc finger protein XlCGF66.1 (Xenopus laevis (African clawed frog)).